Consider the following 176-residue polypeptide: Large ribosomal subunit protein uL6 (176 aa).

The protein belongs to the universal ribosomal protein uL6 family. As to quaternary structure, part of the 50S ribosomal subunit.

Functionally, this protein binds to the 23S rRNA, and is important in its secondary structure. It is located near the subunit interface in the base of the L7/L12 stalk, and near the tRNA binding site of the peptidyltransferase center. The chain is Large ribosomal subunit protein uL6 from Methanothrix thermoacetophila (strain DSM 6194 / JCM 14653 / NBRC 101360 / PT) (Methanosaeta thermophila).